The following is a 1104-amino-acid chain: Lon protease homolog, mitochondrial (1104 aa).

Residues 1–54 (MLRGQTLRWRAALQTPRSLILRPLFAPGGYNVGPRSVLETSRRFRSLPPSLRTF) constitute a mitochondrion transit peptide. Disordered regions lie at residues 41 to 192 (SRRF…KPSV) and 296 to 317 (SLIP…TEKR). 2 stretches are compositionally biased toward basic and acidic residues: residues 64–104 (KPPP…DSSG) and 125–144 (KAAD…EAEA). Positions 158–169 (SDSSSESKPSGS) are enriched in low complexity. 2 stretches are compositionally biased toward basic and acidic residues: residues 172–187 (GGDD…DKAL) and 308–317 (NSEDKTTEKR). The Lon N-terminal domain occupies 199-451 (VMAIPIAKRP…KGLVVLKKEL (253 aa)). 604-611 (GPPGVGKT) is an ATP binding site. Basic and acidic residues predominate over residues 825-839 (AEGKAAQEESEKETG). Positions 825–857 (AEGKAAQEESEKETGPIESTSEQEKATTENPRV) are disordered. A Lon proteolytic domain is found at 891-1077 (TFPPGVTMGL…SEVFDILFAD (187 aa)). Catalysis depends on residues S983 and K1026.

This sequence belongs to the peptidase S16 family. Homohexamer or homoheptamer. Organized in a ring with a central cavity.

It localises to the mitochondrion matrix. It carries out the reaction Hydrolysis of proteins in presence of ATP.. Functionally, ATP-dependent serine protease that mediates the selective degradation of misfolded, unassembled or oxidatively damaged polypeptides as well as certain short-lived regulatory proteins in the mitochondrial matrix. May also have a chaperone function in the assembly of inner membrane protein complexes. Participates in the regulation of mitochondrial gene expression and in the maintenance of the integrity of the mitochondrial genome. Binds to mitochondrial DNA in a site-specific manner. In Emericella nidulans (strain FGSC A4 / ATCC 38163 / CBS 112.46 / NRRL 194 / M139) (Aspergillus nidulans), this protein is Lon protease homolog, mitochondrial (pim1).